Here is a 296-residue protein sequence, read N- to C-terminus: Polyamine aminopropyltransferase (296 aa).

Residues 16 to 251 enclose the PABS domain; that stretch reads HLWYFEYYTG…GMWSYTFASK (236 aa). Gln46 is an S-methyl-5'-thioadenosine binding site. Spermidine contacts are provided by His77 and Asp101. Residues Glu121 and 152-153 each bind S-methyl-5'-thioadenosine; that span reads NG. Catalysis depends on Asp170, which acts as the Proton acceptor. 170–173 provides a ligand contact to spermidine; it reads DSTD.

The protein belongs to the spermidine/spermine synthase family. In terms of assembly, homotetramer.

Its subcellular location is the cytoplasm. The enzyme catalyses S-adenosyl 3-(methylsulfanyl)propylamine + putrescine = S-methyl-5'-thioadenosine + spermidine + H(+). Its pathway is amine and polyamine biosynthesis; spermidine biosynthesis; spermidine from putrescine: step 1/1. Its activity is regulated as follows. Strongly inhibited by S-adenosyl-1,8-diamino-3-thiooctane. Catalyzes the irreversible transfer of a propylamine group from the amino donor S-adenosylmethioninamine (decarboxy-AdoMet) to putrescine (1,4-diaminobutane) to yield spermidine. It has lower affinity and lower activity towards 1,3-diaminopropane, cadaverine (1,5-diaminopentane), agmatine, norspermidine and spermidine (in vitro). The sequence is that of Polyamine aminopropyltransferase from Thermotoga maritima (strain ATCC 43589 / DSM 3109 / JCM 10099 / NBRC 100826 / MSB8).